Reading from the N-terminus, the 221-residue chain is N-(5'-phosphoribosyl)anthranilate isomerase (221 aa).

The protein belongs to the TrpF family.

The enzyme catalyses N-(5-phospho-beta-D-ribosyl)anthranilate = 1-(2-carboxyphenylamino)-1-deoxy-D-ribulose 5-phosphate. The protein operates within amino-acid biosynthesis; L-tryptophan biosynthesis; L-tryptophan from chorismate: step 3/5. This is N-(5'-phosphoribosyl)anthranilate isomerase from Parabacteroides distasonis (strain ATCC 8503 / DSM 20701 / CIP 104284 / JCM 5825 / NCTC 11152).